Here is a 127-residue protein sequence, read N- to C-terminus: Calcium-binding protein PBP1 (127 aa).

Polar residues predominate over residues 1–18; it reads MASPKSSTRPNQENQEPQ. Residues 1–20 form a disordered region; that stretch reads MASPKSSTRPNQENQEPQFQ. An EF-hand domain is found at 72 to 107; that stretch reads LTDDDVRYMINEGDFDRDGALNQMEFCVLMFRLSPE. Ca(2+) is bound by residues Asp-85, Asp-87, Asp-89, and Glu-96.

In terms of assembly, interacts with PID.

In terms of biological role, potential calcium sensor that binds calcium in vitro. The chain is Calcium-binding protein PBP1 (PBP1) from Arabidopsis thaliana (Mouse-ear cress).